The sequence spans 63 residues: Conotoxin LeDr243 (63 aa).

Residues methionine 1–alanine 22 form the signal peptide. Residues arginine 23–serine 47 constitute a propeptide that is removed on maturation. A Cysteine amide modification is found at cysteine 60. A propeptide spanning residues leucine 62 to glycine 63 is cleaved from the precursor.

Belongs to the conotoxin T superfamily. In terms of processing, contains 2 disulfide bonds that can be either 'C1-C3, C2-C4' or 'C1-C4, C2-C3', since these disulfide connectivities have been observed for conotoxins with cysteine framework V (for examples, see AC P0DQQ7 and AC P81755). As to expression, expressed by the venom duct.

The protein localises to the secreted. The polypeptide is Conotoxin LeDr243 (Conus litteratus (Lettered cone)).